Reading from the N-terminus, the 1060-residue chain is Valine--tRNA ligase, mitochondrial (1060 aa).

Residues Met-1–Gly-15 constitute a mitochondrion transit peptide. The interval Pro-25 to Arg-50 is disordered. The 'HIGH' region signature appears at Pro-146–His-156. Position 548 is an N6-acetyllysine (Lys-548). A 'KMSKS' region motif is present at residues Lys-659–Ser-663. An ATP-binding site is contributed by Lys-662.

Belongs to the class-I aminoacyl-tRNA synthetase family.

It is found in the mitochondrion. It carries out the reaction tRNA(Val) + L-valine + ATP = L-valyl-tRNA(Val) + AMP + diphosphate. In terms of biological role, catalyzes the attachment of valine to tRNA(Val) in a two-step reaction: valine is first activated by ATP to form Val-AMP and then transferred to the acceptor end of tRNA(Val). The polypeptide is Valine--tRNA ligase, mitochondrial (Vars2) (Mus musculus (Mouse)).